The sequence spans 389 residues: uncharacterized protein (389 aa).

Disordered stretches follow at residues S119–Q156, P180–G233, S294–T321, and P362–V389. Positions S137–N155 are enriched in polar residues. Residues D190–A204 show a composition bias toward acidic residues.

This is an uncharacterized protein from Caenorhabditis elegans.